The primary structure comprises 376 residues: MPPTPEVGLPLWLLAELTYRCPLQCPYCSNPLDFAAQGQELSTEQWFKVMAEAREMGAAQIGFSGGEPLVRQDLAQLIAEARRLGYYTNLITSGIGLNEARIADFKKAGLDHIQISFQASDEQVNNLLAGSKKAFAQKLEMARAVKAHGYPMVLNFVTHRHNIDKIDRIIELCIALEADFVELATCQFYGWAHLNRLGLLPTRAQLERAERITNEYRDKLKAEGNPCKLIFVTPDYYEERPKACMNGWGNLFLTITPDGTALPCHGARQLPVQFPNVRDHDLHHIWYESFGFNRFRGYEWMREPCRSCDEKEKDFGGCRCQAFMLTGDASNADPVCAKSTEHGIILKAREEAETAQLAIEQMTFRNDRNSRVIARG.

The Radical SAM core domain occupies 7 to 222 (VGLPLWLLAE…TNEYRDKLKA (216 aa)). [4Fe-4S] cluster is bound by residues Cys-21, Cys-25, and Cys-28.

Belongs to the radical SAM superfamily. PqqE family. As to quaternary structure, interacts with PqqD. The interaction is necessary for activity of PqqE. The cofactor is [4Fe-4S] cluster.

It carries out the reaction [PQQ precursor protein] + S-adenosyl-L-methionine = E-Y cross-linked-[PQQ precursor protein] + 5'-deoxyadenosine + L-methionine + H(+). The protein operates within cofactor biosynthesis; pyrroloquinoline quinone biosynthesis. Its function is as follows. Catalyzes the cross-linking of a glutamate residue and a tyrosine residue in the PqqA protein as part of the biosynthesis of pyrroloquinoline quinone (PQQ). The chain is PqqA peptide cyclase from Pseudomonas putida (strain ATCC 700007 / DSM 6899 / JCM 31910 / BCRC 17059 / LMG 24140 / F1).